Here is a 503-residue protein sequence, read N- to C-terminus: Aminoaldehyde dehydrogenase 1, peroxisomal (503 aa).

The Na(+) site is built by Asn-27, Ile-28, Asp-99, and Leu-189. 238–245 (GSSATGSK) contacts NAD(+). Glu-260 serves as the catalytic Proton acceptor. The NAD(+) site is built by Cys-294 and Glu-393. The Nucleophile role is filled by Cys-294. The short motif at 501-503 (SKL) is the Microbody targeting signal element.

This sequence belongs to the aldehyde dehydrogenase family. As to quaternary structure, forms homodimers.

It localises to the peroxisome. It carries out the reaction 3-aminopropanal + NAD(+) + H2O = beta-alanine + NADH + 2 H(+). It catalyses the reaction 4-aminobutanal + NAD(+) + H2O = 4-aminobutanoate + NADH + 2 H(+). The enzyme catalyses 4-guanidinobutanal + NAD(+) + H2O = 4-guanidinobutanoate + NADH + 2 H(+). It functions in the pathway amine and polyamine biosynthesis; betaine biosynthesis via choline pathway; betaine from betaine aldehyde: step 1/1. Its function is as follows. Dehydrogenase that catalyzes the oxidation of several aminoaldehydes. Metabolizes and detoxifies aldehyde products of polyamine degradation to non-toxic amino acids. Catalyzes the oxidation of 3-aminopropanal to beta-alanine. Catalyzes the oxidation of 4-aminobutanal to 4-aminobutanoate. Catalyzes the oxidation of 4-guanidinobutanal to 4-guanidinobutanoate. The chain is Aminoaldehyde dehydrogenase 1, peroxisomal from Pisum sativum (Garden pea).